A 482-amino-acid chain; its full sequence is Serine carboxypeptidase-like 36 (482 aa).

Positions 1–25 are cleaved as a signal peptide; the sequence is MGKRQDWSVTACIFLFLSLASQIHC. 3 disulfide bridges follow: C119/C363, C275/C286, and C310/C331. Residue S210 is part of the active site. The N-linked (GlcNAc...) asparagine glycan is linked to N228. N312 and N352 each carry an N-linked (GlcNAc...) asparagine glycan. D402 is a catalytic residue. 2 N-linked (GlcNAc...) asparagine glycosylation sites follow: N418 and N444. H455 is a catalytic residue.

This sequence belongs to the peptidase S10 family. Expressed in seedlings, flowers and siliques.

It is found in the secreted. Probable carboxypeptidase. The polypeptide is Serine carboxypeptidase-like 36 (SCPL36) (Arabidopsis thaliana (Mouse-ear cress)).